Consider the following 260-residue polypeptide: Adenosylcobinamide-GDP ribazoletransferase (260 aa).

8 consecutive transmembrane segments (helical) span residues 3–23, 36–56, 60–80, 108–128, 133–153, 180–200, 206–226, and 239–259; these read APLW…LPAW, FAPW…LVLI, WPTS…SGGL, VGAS…AALL, LAPL…LWAM, ALPA…LMIV, MVLM…PELL, and GASV…LLTA.

The protein belongs to the CobS family. Mg(2+) serves as cofactor.

The protein localises to the cell inner membrane. The enzyme catalyses alpha-ribazole + adenosylcob(III)inamide-GDP = adenosylcob(III)alamin + GMP + H(+). The catalysed reaction is alpha-ribazole 5'-phosphate + adenosylcob(III)inamide-GDP = adenosylcob(III)alamin 5'-phosphate + GMP + H(+). Its pathway is cofactor biosynthesis; adenosylcobalamin biosynthesis; adenosylcobalamin from cob(II)yrinate a,c-diamide: step 7/7. Joins adenosylcobinamide-GDP and alpha-ribazole to generate adenosylcobalamin (Ado-cobalamin). Also synthesizes adenosylcobalamin 5'-phosphate from adenosylcobinamide-GDP and alpha-ribazole 5'-phosphate. This Prochlorococcus marinus (strain MIT 9303) protein is Adenosylcobinamide-GDP ribazoletransferase.